A 252-amino-acid chain; its full sequence is Adenosylcobinamide-GDP ribazoletransferase (252 aa).

A run of 7 helical transmembrane segments spans residues 35-55, 58-78, 113-133, 139-159, 170-190, 192-212, and 231-251; these read AMLPLIGLIVGCIQWVVFYIL, IFPANITAIFIILVGMVLIGG, FAVLALIFDILIKYSALSFII, YAIIITPIMSRCTLVFLFLIG, LFIENVSVKEFIISFIFMIVP, VLLIGYKYSVIIIVVSFIITL, and GANNEIVEMFTMLVFVALLYI.

This sequence belongs to the CobS family. The cofactor is Mg(2+).

The protein resides in the cell membrane. It catalyses the reaction alpha-ribazole + adenosylcob(III)inamide-GDP = adenosylcob(III)alamin + GMP + H(+). It carries out the reaction alpha-ribazole 5'-phosphate + adenosylcob(III)inamide-GDP = adenosylcob(III)alamin 5'-phosphate + GMP + H(+). It functions in the pathway cofactor biosynthesis; adenosylcobalamin biosynthesis; adenosylcobalamin from cob(II)yrinate a,c-diamide: step 7/7. Joins adenosylcobinamide-GDP and alpha-ribazole to generate adenosylcobalamin (Ado-cobalamin). Also synthesizes adenosylcobalamin 5'-phosphate from adenosylcobinamide-GDP and alpha-ribazole 5'-phosphate. The polypeptide is Adenosylcobinamide-GDP ribazoletransferase (Clostridium tetani (strain Massachusetts / E88)).